Reading from the N-terminus, the 88-residue chain is Small ribosomal subunit protein uS19 (88 aa).

Belongs to the universal ribosomal protein uS19 family.

Its function is as follows. Protein S19 forms a complex with S13 that binds strongly to the 16S ribosomal RNA. This chain is Small ribosomal subunit protein uS19 (rpsS), found in Chlamydia muridarum (strain MoPn / Nigg).